The following is a 463-amino-acid chain: Glutamate--tRNA ligase 1 (463 aa).

A 'HIGH' region motif is present at residues 10–20 (PSPTGYLHIGG). The 'KMSKS' region motif lies at 238 to 242 (KLSKR). Lys-241 lines the ATP pocket.

This sequence belongs to the class-I aminoacyl-tRNA synthetase family. Glutamate--tRNA ligase type 1 subfamily. As to quaternary structure, monomer.

Its subcellular location is the cytoplasm. It carries out the reaction tRNA(Glu) + L-glutamate + ATP = L-glutamyl-tRNA(Glu) + AMP + diphosphate. Functionally, catalyzes the attachment of glutamate to tRNA(Glu) in a two-step reaction: glutamate is first activated by ATP to form Glu-AMP and then transferred to the acceptor end of tRNA(Glu). This Helicobacter pylori (strain Shi470) protein is Glutamate--tRNA ligase 1.